The chain runs to 278 residues: Orotidine 5'-phosphate decarboxylase (278 aa).

Substrate is bound by residues Asp40, 62 to 64 (KTH), 93 to 102 (DRKFIDIGNT), Tyr229, and Arg247. The active-site Proton donor is Lys95.

The protein belongs to the OMP decarboxylase family.

It catalyses the reaction orotidine 5'-phosphate + H(+) = UMP + CO2. Its pathway is pyrimidine metabolism; UMP biosynthesis via de novo pathway; UMP from orotate: step 2/2. The polypeptide is Orotidine 5'-phosphate decarboxylase (pyrG) (Aspergillus fumigatus (strain ATCC MYA-4609 / CBS 101355 / FGSC A1100 / Af293) (Neosartorya fumigata)).